The chain runs to 264 residues: Thymidylate synthase (264 aa).

Arg21 contributes to the dUMP binding site. His51 serves as a coordination point for (6R)-5,10-methylene-5,6,7,8-tetrahydrofolate. 126–127 (RR) is a dUMP binding site. Catalysis depends on Cys146, which acts as the Nucleophile. DUMP-binding positions include 166 to 169 (RSCD), Asn177, and 207 to 209 (HLY). Asp169 lines the (6R)-5,10-methylene-5,6,7,8-tetrahydrofolate pocket. Ala263 contacts (6R)-5,10-methylene-5,6,7,8-tetrahydrofolate.

Belongs to the thymidylate synthase family. Bacterial-type ThyA subfamily. In terms of assembly, homodimer.

The protein resides in the cytoplasm. The catalysed reaction is dUMP + (6R)-5,10-methylene-5,6,7,8-tetrahydrofolate = 7,8-dihydrofolate + dTMP. Its pathway is pyrimidine metabolism; dTTP biosynthesis. In terms of biological role, catalyzes the reductive methylation of 2'-deoxyuridine-5'-monophosphate (dUMP) to 2'-deoxythymidine-5'-monophosphate (dTMP) while utilizing 5,10-methylenetetrahydrofolate (mTHF) as the methyl donor and reductant in the reaction, yielding dihydrofolate (DHF) as a by-product. This enzymatic reaction provides an intracellular de novo source of dTMP, an essential precursor for DNA biosynthesis. The polypeptide is Thymidylate synthase (Enterobacter sp. (strain 638)).